Consider the following 179-residue polypeptide: Transcription factor NF-E4 (179 aa).

N6-acetyllysine is present on lysine 43. The disordered stretch occupies residues 100-179; sequence AMKATGPHNA…QLPSLHLSQG (80 aa). Composition is skewed to polar residues over residues 143-153 and 163-179; these read LSQSNPPTRIS and ALEQTPQQLPSLHLSQG.

As to quaternary structure, component of the SSP (stage selector protein) complex, which appears to be a heteromer of TFCP2 and 2 copies of NFE4. Interacts with HDAC1 and PCAF. Isoform 2 interacts with TFCP2. In terms of processing, acetylation at Lys-43 prolongs the protein half-life by preventing ubiquitin-mediated degradation and reduces the interaction between NF-E4 and HDAC1, potentially maximizing the activating ability of the factor at the gamma-promoter. Post-translationally, ubiquitinated; leading to its degradation by the proteasome. Acetylation at Lys-43 prevents ubiquitination. In terms of tissue distribution, specifically expressed in fetal liver, cord blood and bone marrow. Also expressed in the K562 and HEL cell lines, which constitutively express the fetal globin genes.

It is found in the nucleus. Functionally, functions as part of the SSP (stage selector protein) complex, a complex that contributes to the preferential expression of the gamma-gene in fetal erythroid cells by facilitating the interaction of the gamma-globin genes with enhancer elements contained in the locus control region (LCR). The complex binds to the stage selector element (SSE) in the proximal gamma-globin promoter. In contrast, isoform 2 acts as a repressor of gamma-globin gene expression by preventing NFE2 and RNA polymerase II recruitment to the promoter. The polypeptide is Transcription factor NF-E4 (NFE4) (Homo sapiens (Human)).